The primary structure comprises 158 residues: Small ribosomal subunit protein uS7 (158 aa).

This sequence belongs to the universal ribosomal protein uS7 family. In terms of assembly, part of the 30S ribosomal subunit. Contacts proteins S9 and S11.

In terms of biological role, one of the primary rRNA binding proteins, it binds directly to 16S rRNA where it nucleates assembly of the head domain of the 30S subunit. Is located at the subunit interface close to the decoding center, probably blocks exit of the E-site tRNA. The chain is Small ribosomal subunit protein uS7 from Leptospira biflexa.